We begin with the raw amino-acid sequence, 166 residues long: UBA-like domain-containing protein 2-A (166 aa).

Residues 120 to 166 form a disordered region; it reads QQPVWLPPASPTTHLHHHHHHPQPVWPPNSQPTGGPQKAMAAMDGQR.

The protein belongs to the UBALD family.

In Xenopus laevis (African clawed frog), this protein is UBA-like domain-containing protein 2-A (ubald2-a).